Consider the following 382-residue polypeptide: UBP1-associated proteins 1B (382 aa).

The interval 1 to 99 (MAKEGEERKK…SDESEEIVDS (99 aa)) is disordered. A compositionally biased stretch (basic residues) spans 10-22 (KEKKEKKERKERK). Over residues 23 to 34 (RREAEELAVREK) the composition is skewed to basic and acidic residues. Positions 163 to 248 (RNIFVRGLGW…RPFNSGKPRE (86 aa)) constitute an RRM domain.

The protein localises to the nucleus. In terms of biological role, acts as a component of a complex regulating the turnover of mRNAs in the nucleus. Binds with high affinity to RNA molecules that contain U-rich sequences in 3'-UTRs. May function in complex with UBP1 and contribute to the stabilization of mRNAs in the nucleus. This Arabidopsis thaliana (Mouse-ear cress) protein is UBP1-associated proteins 1B (UBA1B).